Here is a 363-residue protein sequence, read N- to C-terminus: Probable endopolygalacturonase B (363 aa).

An N-terminal signal peptide occupies residues 1 to 20 (MQLLQSSVIAATVGAALVAA). Residues 21 to 28 (VPVELEAR) constitute a propeptide that is removed on maturation. A disulfide bond links Cys31 and Cys46. PbH1 repeat units lie at residues 158-187 (SDNLNITDVTIDNSAGTAEGHNTDAFDVGS), 188-209 (STYINIDGATVYNQDDCLAINS), 210-230 (GSHITFTNGYCDGGHGLSIGS), 239-260 (VEDVTISNSKVVNSQNGVRIKT), 268-290 (VSNVKFEDITLSGITKYGLIVEQ), and 302-347 (TNGI…SITG). The N-linked (GlcNAc...) asparagine glycan is linked to Asn162. The active-site Proton donor is Asp202. Cys204 and Cys220 are disulfide-bonded. The active site involves His224. 2 cysteine pairs are disulfide-bonded: Cys330-Cys335 and Cys354-Cys363.

This sequence belongs to the glycosyl hydrolase 28 family.

It is found in the secreted. It carries out the reaction (1,4-alpha-D-galacturonosyl)n+m + H2O = (1,4-alpha-D-galacturonosyl)n + (1,4-alpha-D-galacturonosyl)m.. Functionally, involved in maceration and soft-rotting of plant tissue. Hydrolyzes the 1,4-alpha glycosidic bonds of de-esterified pectate in the smooth region of the plant cell wall. This chain is Probable endopolygalacturonase B (pgaB), found in Aspergillus flavus (strain ATCC 200026 / FGSC A1120 / IAM 13836 / NRRL 3357 / JCM 12722 / SRRC 167).